The primary structure comprises 214 residues: Ribosomal RNA large subunit methyltransferase E (214 aa).

S-adenosyl-L-methionine contacts are provided by Gly60, Trp62, Asp86, Asp102, and Asp127. Catalysis depends on Lys167, which acts as the Proton acceptor.

The protein belongs to the class I-like SAM-binding methyltransferase superfamily. RNA methyltransferase RlmE family.

The protein resides in the cytoplasm. The enzyme catalyses uridine(2552) in 23S rRNA + S-adenosyl-L-methionine = 2'-O-methyluridine(2552) in 23S rRNA + S-adenosyl-L-homocysteine + H(+). Its function is as follows. Specifically methylates the uridine in position 2552 of 23S rRNA at the 2'-O position of the ribose in the fully assembled 50S ribosomal subunit. The protein is Ribosomal RNA large subunit methyltransferase E of Herminiimonas arsenicoxydans.